A 628-amino-acid polypeptide reads, in one-letter code: Forkhead box protein O (628 aa).

Disordered stretches follow at residues 39-77 (RARS…DSQQ), 182-205 (KSVR…RAKK), 217-269 (GLND…RLSP), 316-359 (QQQG…APGY), and 389-415 (NSVT…YSNV). Threonine 44 carries the phosphothreonine; by PKB/AKT1 modification. Residues 63–77 (TKASNQQLAPGDSQQ) show a composition bias toward polar residues. Serine 75 is subject to Phosphoserine. The fork-head DNA-binding region spans 95–201 (WGNLSYADLI…ETSRYEKRRG (107 aa)). Serine 190 is modified (phosphoserine; by PKB/AKT1). Composition is skewed to polar residues over residues 221 to 230 (ATPSPSSSVS) and 256 to 265 (RASSNASSCG). Serine 259 is modified (phosphoserine; by PKB/AKT1). Serine 262, serine 263, and serine 268 each carry phosphoserine. Positions 328–337 (SQPPPPPYQP) are enriched in pro residues. A compositionally biased stretch (low complexity) spans 338–351 (PQHQQAQQQQSPYA). The segment covering 402-414 (SEPSSDSLNTYSN) has biased composition (polar residues).

In terms of assembly, interacts with melt.

It localises to the cytoplasm. The protein localises to the nucleus. Functionally, transcription factor involved in the regulation of the insulin signaling pathway. Consistently activates both the downstream target Thor\d4EBP and the feedback control target InR. Involved in negative regulation of the cell cycle, modulating cell growth and proliferation. In response to cellular stresses, such as nutrient deprivation or increased levels of reactive oxygen species, foxo is activated and inhibits growth through the action of target genes such as Thor. Foxo activated in the adult fat body can regulate lifespan in adults; an insulin peptide itself may function as one secondary messenger of insulin-regulated aging. Also regulates Lip4, homolog of human acid lipases, thereby acting as a key modulator of lipid metabolism by insulin signaling and integrates insulin responses to glucose and lipid homeostasis. In Drosophila yakuba (Fruit fly), this protein is Forkhead box protein O.